Consider the following 504-residue polypeptide: Anaerobic nitric oxide reductase transcription regulator NorR (504 aa).

D57 bears the 4-aspartylphosphate mark. The 230-residue stretch at 187–416 (MIGLSPGMTQ…LEHAIHRAVV (230 aa)) folds into the Sigma-54 factor interaction domain. Residues 215 to 222 (GETGTGKE) and 278 to 287 (ADNGTLFLDE) each bind ATP. The segment at residues 479-498 (WAACARMLETDVANLHRLAK) is a DNA-binding region (H-T-H motif).

The protein operates within nitrogen metabolism; nitric oxide reduction. Its function is as follows. Required for the expression of anaerobic nitric oxide (NO) reductase, acts as a transcriptional activator for at least the norVW operon. Activation also requires sigma-54. This Shigella dysenteriae serotype 1 (strain Sd197) protein is Anaerobic nitric oxide reductase transcription regulator NorR.